Here is a 258-residue protein sequence, read N- to C-terminus: MSILLNKTRKLNTILQKSGTEPVIFDDICNILSEVLECNVYVVSRKGKILGNNFSSGFECEKLKKEIIPTKKFPDSYNLKLLDCKETKANLKHTEFCTFYENEKCEFENKVSTIVPIIGNRERLGTLVLARFTKKFTDDDLVLAEYSATIVGLEILRSKNDEIEAEARKRAVVQLAIGTLSYSELEAVEHIFNELDGNEGLLVASKIADKVGITRSVIVNALRKFESAGVIESRSLGMKGTHIKILNDRLLEGLKKIK.

A GAF domain region spans residues 1–156 (MSILLNKTRK…SATIVGLEIL (156 aa)). The H-T-H motif DNA-binding region spans 204 to 223 (ASKIADKVGITRSVIVNALR).

It belongs to the CodY family.

The protein localises to the cytoplasm. Its function is as follows. DNA-binding global transcriptional regulator which is involved in the adaptive response to starvation and acts by directly or indirectly controlling the expression of numerous genes in response to nutrient availability. During rapid exponential growth, CodY is highly active and represses genes whose products allow adaptation to nutrient depletion. This chain is Global transcriptional regulator CodY, found in Clostridium acetobutylicum (strain ATCC 824 / DSM 792 / JCM 1419 / IAM 19013 / LMG 5710 / NBRC 13948 / NRRL B-527 / VKM B-1787 / 2291 / W).